The chain runs to 145 residues: Leghemoglobin-2 (145 aa).

In terms of domain architecture, Globin spans 3-145 (AFSDKQEGLV…ELAAAIKKAY (143 aa)). Y26 and Y31 each carry nitrated tyrosine. S46 is a binding site for heme b. Phosphoserine is present on S46. Residue H62 coordinates O2. Residues K65, H93, and K96 each coordinate heme b. A Nitrated tyrosine modification is found at Y134.

This sequence belongs to the plant globin family. As to quaternary structure, monomer. Nitrated in effective nodules and particularly in hypoxic conditions; this mechanism may play a protective role in the symbiosis by buffering toxic peroxynitrite NO(2)(-). Nitration level decrease during nodule senescence. Post-translationally, phosphorylation at Ser-46 disrupts the molecular environment of its porphyrin ring oxygen binding pocket, thus leading to a reduced oxygen consumption and to the delivery of oxygen O(2) to symbiosomes. Root nodules.

Its subcellular location is the cytoplasm. It is found in the cytosol. The protein resides in the nucleus. Leghemoglobin that reversibly binds oxygen O(2) through a pentacoordinated heme iron. In root nodules, facilitates the diffusion of oxygen to the bacteroids while preventing the bacterial nitrogenase from being inactivated by buffering dioxygen, nitric oxide and carbon monoxide, and promoting the formation of reactive oxygen species (ROS, e.g. H(2)O(2)). This role is essential for symbiotic nitrogen fixation (SNF). This is Leghemoglobin-2 from Vigna unguiculata (Cowpea).